The chain runs to 130 residues: Small ribosomal subunit protein uS11c (130 aa).

Belongs to the universal ribosomal protein uS11 family. Part of the 30S ribosomal subunit.

The protein localises to the plastid. It localises to the chloroplast. This chain is Small ribosomal subunit protein uS11c, found in Mesostigma viride (Green alga).